Consider the following 36-residue polypeptide: Conotoxin Bu21 (36 aa).

Residues 1–21 constitute a propeptide that is removed on maturation; the sequence is DGANAEATDNKPGVFERDEKK. 2 cysteine pairs are disulfide-bonded: Cys-22-Cys-28 and Cys-23-Cys-34.

It belongs to the conotoxin A superfamily. Expressed by the venom duct.

The protein resides in the secreted. This is Conotoxin Bu21 from Conus bullatus (Bubble cone).